A 401-amino-acid chain; its full sequence is Glucose/mannose transporter GlcP (401 aa).

12 helical membrane passes run alanine 11–leucine 31, valine 43–isoleucine 63, isoleucine 78–methionine 98, alanine 99–alanine 119, glutamate 132–isoleucine 152, phenylalanine 156–phenylalanine 176, leucine 212–phenylalanine 232, leucine 247–valine 267, leucine 278–isoleucine 298, leucine 306–isoleucine 326, leucine 336–leucine 356, and threonine 360–valine 380.

This sequence belongs to the major facilitator superfamily.

It localises to the cell membrane. In terms of biological role, can transport glucose, mannose, 2-deoxyglucose and methyl alpha-glucoside, but not galactose. This is Glucose/mannose transporter GlcP (glcP) from Bacillus subtilis (strain 168).